The following is a 266-amino-acid chain: Glutamate racemase (266 aa).

Residues 9 to 10 (DS) and 41 to 42 (YG) each bind substrate. C72 serves as the catalytic Proton donor/acceptor. Position 73 to 74 (73 to 74 (NT)) interacts with substrate. The Proton donor/acceptor role is filled by C184. 185–186 (TH) is a substrate binding site.

This sequence belongs to the aspartate/glutamate racemases family.

The catalysed reaction is L-glutamate = D-glutamate. It participates in cell wall biogenesis; peptidoglycan biosynthesis. Its function is as follows. Provides the (R)-glutamate required for cell wall biosynthesis. In Staphylococcus carnosus (strain TM300), this protein is Glutamate racemase.